Consider the following 1000-residue polypeptide: Isoleucine--tRNA ligase, mitochondrial (1000 aa).

The N-terminal 27 residues, 1 to 27 (MLGAWRAAPRLRLRARFGVASVWARSA), are a transit peptide targeting the mitochondrion. The 'HIGH' region motif lies at 102–112 (PYANGDPHVGH). The ATP site is built by K649 and K652. The 'KMSKS' region motif lies at 649–653 (KMSKS).

It belongs to the class-I aminoacyl-tRNA synthetase family.

It is found in the mitochondrion matrix. It carries out the reaction tRNA(Ile) + L-isoleucine + ATP = L-isoleucyl-tRNA(Ile) + AMP + diphosphate. Its function is as follows. Aminoacyl-tRNA synthetase that catalyzes the specific attachment of isoleucine to its cognate tRNA (tRNA(Ile)). The sequence is that of Isoleucine--tRNA ligase, mitochondrial (IARS2) from Gallus gallus (Chicken).